Consider the following 85-residue polypeptide: Cell division topological specificity factor (85 aa).

It belongs to the MinE family.

Prevents the cell division inhibition by proteins MinC and MinD at internal division sites while permitting inhibition at polar sites. This ensures cell division at the proper site by restricting the formation of a division septum at the midpoint of the long axis of the cell. This is Cell division topological specificity factor from Shewanella sp. (strain ANA-3).